Consider the following 118-residue polypeptide: MRNNKTPFLSAIFTASIRGYQRFFSAFTPSSCRFYPTCSNYALWLLCFENPLSAMGKIAIRILSCNPFCSGGIAYPTTRLKRPSLLQSHKDFNRNFKTITFWLVPTTKSRTTYYIIKV.

This sequence belongs to the UPF0161 family.

It is found in the cell inner membrane. In terms of biological role, could be involved in insertion of integral membrane proteins into the membrane. The polypeptide is Putative membrane protein insertion efficiency factor (Helicobacter pylori (strain HPAG1)).